A 372-amino-acid polypeptide reads, in one-letter code: MFNFEISAHCPHTKGRCGCFHTPHGPVQTPRFMPVGTLATVKGISTEQLARTGAQMVLSNTYHLHLQPGEQVVAEAGGLHRFMGWDGPMLTDSGGFQVFSLGNLNKIDERGVVFRNPRDGRTIDMTPEHATNIQMALGADVAMAFDQCPPYPATENDVKDACRRTHAWLERCVNAHTRSDQALFGIVQGGCFPHLRRESARAVAAFDLPGIAIGGVSVGEPTDDMHRIVRDIGPLLPLDRPRYLMGIGTLREMAVAVANGIDLFDCVLPTRLGRHGTALVGGERWNLRNARFRNDHTPLDSSCSCLACTGHSRAYIHHLIRSDELLGLTLLSLHNITHLVRFTNAMAQAIQDGCFSEDFAPWQEDSPAHHTW.

The active-site Proton acceptor is aspartate 92. Substrate contacts are provided by residues 92–96, aspartate 146, glutamine 188, and glycine 215; that span reads DSGGF. The segment at 246 to 252 is RNA binding; the sequence is GIGTLRE. The active-site Nucleophile is aspartate 265. Residues 270-274 form an RNA binding; important for wobble base 34 recognition region; it reads TRLGR. Zn(2+) is bound by residues cysteine 303, cysteine 305, cysteine 308, and histidine 334.

It belongs to the queuine tRNA-ribosyltransferase family. Homodimer. Within each dimer, one monomer is responsible for RNA recognition and catalysis, while the other monomer binds to the replacement base PreQ1. Zn(2+) is required as a cofactor.

It catalyses the reaction 7-aminomethyl-7-carbaguanine + guanosine(34) in tRNA = 7-aminomethyl-7-carbaguanosine(34) in tRNA + guanine. Its pathway is tRNA modification; tRNA-queuosine biosynthesis. Its function is as follows. Catalyzes the base-exchange of a guanine (G) residue with the queuine precursor 7-aminomethyl-7-deazaguanine (PreQ1) at position 34 (anticodon wobble position) in tRNAs with GU(N) anticodons (tRNA-Asp, -Asn, -His and -Tyr). Catalysis occurs through a double-displacement mechanism. The nucleophile active site attacks the C1' of nucleotide 34 to detach the guanine base from the RNA, forming a covalent enzyme-RNA intermediate. The proton acceptor active site deprotonates the incoming PreQ1, allowing a nucleophilic attack on the C1' of the ribose to form the product. After dissociation, two additional enzymatic reactions on the tRNA convert PreQ1 to queuine (Q), resulting in the hypermodified nucleoside queuosine (7-(((4,5-cis-dihydroxy-2-cyclopenten-1-yl)amino)methyl)-7-deazaguanosine). This is Queuine tRNA-ribosyltransferase from Synechococcus sp. (strain CC9902).